The sequence spans 222 residues: uncharacterized protein (222 aa).

N-linked (GlcNAc...) asparagine; by host glycosylation is found at asparagine 4, asparagine 75, asparagine 84, asparagine 104, asparagine 170, and asparagine 175. The helical transmembrane segment at 200–220 (LIIIIGIVIILLLIIVMIKTV) threads the bilayer.

It localises to the membrane. This is an uncharacterized protein from Acanthamoeba polyphaga (Amoeba).